The chain runs to 350 residues: MLHHMRTIINASWRYGNKCIVRQFGFSQTYSQLKGRDLLTLKNYSAEEIKYLLWVAADLKYRIKEKGEYLPLLQGKSLAMIFEKRSTRTRLSTETGFALLGGHPSFLTTQDIHLGVNESLKDTARVLSGMTDAVLARVYHQSDLEVLAEEASIPIVNGLSDDYHPIQILADYLTIQEHYGHLKGLTISWIGDGNNVLHSIMMSAAKFGMHLHIATPKGYEPNSSLTEAAKQFSKECGTKLLMTNDPLEAANGANVLVTDTWVSMGQEEEKKKRLLDFKGYQITMKTAKLAAPNWIFLHCLPRKPEEVDDEVFYCPKSLVFQEAENRKWTIMGVMVSLLTDYSPQLLRPTF.

The N-terminal 30 residues, 1–30, are a transit peptide targeting the mitochondrion; it reads MLHHMRTIINASWRYGNKCIVRQFGFSQTY. Carbamoyl phosphate is bound by residues 86–90, arginine 137, and histidine 164; that span reads STRTR. An L-ornithine-binding site is contributed by arginine 137. L-ornithine is bound by residues asparagine 195, 259-263, 298-301, and arginine 326; these read DTWVS and HCLP. Cysteine 299 is a catalytic residue. Arginine 326 is a carbamoyl phosphate binding site.

It belongs to the aspartate/ornithine carbamoyltransferase superfamily. OTCase family. Homotrimer. Liver.

It is found in the mitochondrion matrix. The catalysed reaction is carbamoyl phosphate + L-ornithine = L-citrulline + phosphate + H(+). Its pathway is nitrogen metabolism; urea cycle; L-citrulline from L-ornithine and carbamoyl phosphate: step 1/1. Its function is as follows. OTC is necessary for the tadpoles transition from an ammonotelic, aquatic larva to a ureotelic, terrestrial adult. This Aquarana catesbeiana (American bullfrog) protein is Ornithine carbamoyltransferase, mitochondrial.